A 110-amino-acid polypeptide reads, in one-letter code: Nucleoid-associated protein Sfri_2406 (110 aa).

It belongs to the YbaB/EbfC family. In terms of assembly, homodimer.

Its subcellular location is the cytoplasm. It is found in the nucleoid. Binds to DNA and alters its conformation. May be involved in regulation of gene expression, nucleoid organization and DNA protection. In Shewanella frigidimarina (strain NCIMB 400), this protein is Nucleoid-associated protein Sfri_2406.